Consider the following 355-residue polypeptide: Undecaprenyl-phosphate alpha-N-acetylglucosaminyl 1-phosphate transferase (355 aa).

Transmembrane regions (helical) follow at residues 1-21, 39-59, 63-83, 123-143, 182-202, 208-228, 237-257, and 315-335; these read MLSI…MRPL, GTIP…YYLM, QLRL…IGIL, FQLT…IAII, WSFA…GIPF, VFMG…ILLL, MNPV…VAII, and WAMF…ITHA.

Belongs to the glycosyltransferase 4 family. WecA subfamily. It depends on Mg(2+) as a cofactor. Mn(2+) serves as cofactor.

It localises to the cell inner membrane. The catalysed reaction is di-trans,octa-cis-undecaprenyl phosphate + UDP-N-acetyl-alpha-D-glucosamine = N-acetyl-alpha-D-glucosaminyl-di-trans,octa-cis-undecaprenyl diphosphate + UMP. It functions in the pathway bacterial outer membrane biogenesis; LPS O-antigen biosynthesis. Functionally, catalyzes the transfer of the GlcNAc-1-phosphate moiety from UDP-GlcNAc onto the carrier lipid undecaprenyl phosphate (C55-P), yielding GlcNAc-pyrophosphoryl-undecaprenyl (GlcNAc-PP-C55). The protein is Undecaprenyl-phosphate alpha-N-acetylglucosaminyl 1-phosphate transferase of Haemophilus influenzae (strain ATCC 51907 / DSM 11121 / KW20 / Rd).